Consider the following 776-residue polypeptide: MSINLTLDIYIYFLNNARSFCGKQRSKQLNFLCSKQYWRMNHVNVHREFHTSKKSCKWNRSEAHCSKHWHSSSNHGVHIGIVKLSTSAPKGLTKVSIHMSRIKSTLNSVSKAIFGSQNEMVSRLAQFKPSSRIFRKVSDRGWLKHKNVKQAIESLKNYSDKSAEKNSFAEQKSYFADKEEGSDKHSLYHYAYRITTRFGESFYFLANHINSYFKNKEKMSQIKEDRQLQDKPCLEESKSISPSPDILTDRPDSGPPLNVEDKLSSSTQLPEALPVSTKQSIANFLSRPTEGVQALVGGYIGGLVPKLKSDPKSQPEEEEEPSKTDEPICKDKKAEEKKRVLLQREKIIARVSIDNRTRALVQALRRTTDPKLCITRVEELTFHLLEFPEGKGVAVKEKIIPYLLRLRQIKDETLQAAVREILALIGYVDPVKGRGIRILAIDGGGTRGVVALQTLRKLVELTQKPIHQLFDYICGVSTGAILAFMLGLFHMPLDECEELYRKLGSDVFTQNVIVGTVKMSWSHAFYDSHTWEKILKDKVGSALMIETARDPLCPKVAAVSTIVNRGQTPKAFVFRNYGHFPGTNSHYLGGCQYKMWQAIRASSAAPGYFAEYALGNDLHQDGGLLLNNPSALALHECKCIWPDTPLECIVSLGTGRYESDVRNTTTYTSLKTKLSNVISSATDTEEVHIMLDGLLPADTYFRFNPVICENIPLDESRNEKLDQLQLEGMKYLERNDEKMKKLAKILSREKTTLQKISDWIKLKSDMYEGLPFFSKL.

Basic and acidic residues-rich tracts occupy residues Arg226–Lys238 and Leu307–Asp331. 2 disordered regions span residues Arg226–Pro274 and Lys306–Asp331. Residues Leu439–Leu634 form the PNPLA domain. The GXGXXG motif lies at Gly443–Gly448. Residues Leu469–Phe489 form a helical membrane-spanning segment. The short motif at Gly475–Gly479 is the GXSXG element. The active-site Nucleophile is Ser477. The Proton acceptor role is filled by Asp621. A DGA/G motif is present at residues Asp621–Gly623. Lys730 is subject to N6-succinyllysine.

It is found in the endoplasmic reticulum membrane. It localises to the microsome membrane. Its subcellular location is the mitochondrion membrane. The protein resides in the peroxisome membrane. It catalyses the reaction a 1,2-diacyl-sn-glycero-3-phosphocholine + H2O = a 1-acyl-sn-glycero-3-phosphocholine + a fatty acid + H(+). The enzyme catalyses a 1,2-diacyl-sn-glycero-3-phosphocholine + H2O = a 2-acyl-sn-glycero-3-phosphocholine + a fatty acid + H(+). The catalysed reaction is a 1,2-diacyl-sn-glycero-3-phosphoethanolamine + H2O = a 1-acyl-sn-glycero-3-phosphoethanolamine + a fatty acid + H(+). It carries out the reaction a 1-O-(1Z-alkenyl)-2-acyl-sn-glycero-3-phosphocholine + H2O = a 1-O-(1Z-alkenyl)-sn-glycero-3-phosphocholine + a fatty acid + H(+). It catalyses the reaction a 1-acyl-sn-glycero-3-phosphocholine + H2O = sn-glycerol 3-phosphocholine + a fatty acid + H(+). The enzyme catalyses 1-acyl-2-(9Z,12Z)-octadecadienoyl-sn-glycero-3-phosphocholine + H2O = a 1-acyl-sn-glycero-3-phosphocholine + (9Z,12Z)-octadecadienoate + H(+). The catalysed reaction is 1-acyl-2-(5Z,8Z,11Z,14Z-eicosatetraenoyl)-sn-glycero-3-phosphocholine + H2O = a 1-acyl-sn-glycero-3-phosphocholine + (5Z,8Z,11Z,14Z)-eicosatetraenoate + H(+). It carries out the reaction 1-hexadecanoyl-2-(5Z,8Z,11Z,14Z-eicosatetraenoyl)-sn-glycero-3-phosphocholine + H2O = 1-hexadecanoyl-sn-glycero-3-phosphocholine + (5Z,8Z,11Z,14Z)-eicosatetraenoate + H(+). It catalyses the reaction 1-octadecanoyl-2-(9Z-octadecenoyl)-sn-glycero-3-phosphocholine + H2O = 1-octadecanoyl-sn-glycero-3-phosphocholine + (9Z)-octadecenoate + H(+). The enzyme catalyses 1-hexadecanoyl-2-(9Z-octadecenoyl)-sn-glycero-3-phosphocholine + H2O = 1-hexadecanoyl-sn-glycero-3-phosphocholine + (9Z)-octadecenoate + H(+). The catalysed reaction is 1-hexadecanoyl-2-(9Z,12Z-octadecadienoyl)-sn-glycero-3-phosphocholine + H2O = (9Z,12Z)-octadecadienoate + 1-hexadecanoyl-sn-glycero-3-phosphocholine + H(+). It carries out the reaction 1-acyl-2-(9Z,12Z)-octadecadienoyl-sn-glycero-3-phosphoethanolamine + H2O = a 1-acyl-sn-glycero-3-phosphoethanolamine + (9Z,12Z)-octadecadienoate + H(+). It catalyses the reaction 1-acyl-2-(5Z,8Z,11Z,14Z)-eicosatetraenoyl-sn-glycero-3-phosphoethanolamine + H2O = a 1-acyl-sn-glycero-3-phosphoethanolamine + (5Z,8Z,11Z,14Z)-eicosatetraenoate + H(+). The enzyme catalyses 1-hexadecanoyl-2-(5Z,8Z,11Z,14Z-eicosatetraenoyl)-sn-glycero-3-phosphoethanolamine + H2O = 1-hexadecanoyl-sn-glycero-3-phosphoethanolamine + (5Z,8Z,11Z,14Z)-eicosatetraenoate + H(+). The catalysed reaction is 1-hexadecanoyl-2-(5Z,8Z,11Z,14Z-eicosatetraenoyl)-sn-glycero-3-phosphocholine + H2O = 2-(5Z,8Z,11Z,14Z)-eicosatetraenoyl-sn-glycero-3-phosphocholine + hexadecanoate + H(+). It carries out the reaction 1-octadecanoyl-2-(9Z-octadecenoyl)-sn-glycero-3-phosphocholine + H2O = 2-(9Z-octadecenoyl)-sn-glycero-3-phosphocholine + octadecanoate + H(+). It catalyses the reaction 1-hexadecanoyl-2-(4Z,7Z,10Z,13Z,16Z,19Z-docosahexaenoyl)-sn-glycero-3-phosphocholine + H2O = 2-(4Z,7Z,10Z,13Z,16Z,19Z-docosahexaenoyl)-sn-glycero-3-phosphocholine + hexadecanoate + H(+). The enzyme catalyses 1-O-(1Z)-hexadecenyl-2 (5Z,8Z,11Z,14Z)-eicosatetraenoyl-sn-glycero-3-phosphocholine + H2O = 1-(1Z-hexadecenyl)-sn-glycero-3-phosphocholine + (5Z,8Z,11Z,14Z)-eicosatetraenoate + H(+). The catalysed reaction is 1-O-(1Z-hexadecenyl)-2-(9Z-octadecenoyl)-sn-glycero-3-phosphocholine + H2O = 1-(1Z-hexadecenyl)-sn-glycero-3-phosphocholine + (9Z)-octadecenoate + H(+). It carries out the reaction 1-hexadecanoyl-sn-glycero-3-phosphocholine + H2O = sn-glycerol 3-phosphocholine + hexadecanoate + H(+). It catalyses the reaction 1',3'-bis-[1,2-di-(9Z,12Z-octadecadienoyl)-sn-glycero-3-phospho]-glycerol + H2O = 1'-[1,2-di-(9Z,12Z-octadecadienoyl)-sn-glycero-3-phospho]-3'-[1-(9Z,12Z-octadecadienoyl)-sn-glycero-3-phospho]-glycerol + (9Z,12Z)-octadecadienoate + H(+). The enzyme catalyses 1'-[1-acyl-2-(9-hydroxy-(10E,12Z)-octadecadienoyl)-sn-glycero-3-phospho]-3'-[1,2-diacyl-sn-glycero-3-phospho]-glycerol + H2O = 9-hydroxy-(10E,12Z)-octadecadienoate + 1'-[1,2-diacyl-sn-glycero-3-phospho],3'-[1-acyl-sn-glycero-3-phospho]-glycerol + H(+). It functions in the pathway phospholipid metabolism. With respect to regulation, calcium-independent phospholipase. Functionally, calcium-independent and membrane-bound phospholipase, that catalyzes the esterolytic cleavage of fatty acids from glycerophospholipids to yield free fatty acids and lysophospholipids, hence regulating membrane physical properties and the release of lipid second messengers and growth factors. Hydrolyzes phosphatidylethanolamine, phosphatidylcholine and probably phosphatidylinositol with a possible preference for the former. Has also a broad substrate specificity in terms of fatty acid moieties, hydrolyzing saturated and mono-unsaturated fatty acids at nearly equal rates from either the sn-1 or sn-2 position in diacyl phosphatidylcholine. However, has a weak activity toward polyunsaturated fatty acids at the sn-2 position, and thereby favors the production of 2-arachidonoyl lysophosphatidylcholine, a key branch point metabolite in eicosanoid signaling. On the other hand, can produce arachidonic acid from the sn-1 position of diacyl phospholipid and from the sn-2 position of arachidonate-containing plasmalogen substrates. Therefore, plays an important role in the mobilization of arachidonic acid in response to cellular stimuli and the generation of lipid second messengers. Can also hydrolyze lysophosphatidylcholine. In the mitochondrial compartment, catalyzes the hydrolysis and release of oxidized aliphatic chains from cardiolipin and integrates mitochondrial bioenergetics and signaling. It is essential for maintaining efficient bioenergetic mitochondrial function through tailoring mitochondrial membrane lipid metabolism and composition. This is Calcium-independent phospholipase A2-gamma from Rattus norvegicus (Rat).